The following is a 740-amino-acid chain: ABC transporter G family member 1 (740 aa).

The region spanning 82–334 (LDFRNLFPRR…FTEFGSPIPE (253 aa)) is the ABC transporter domain. 127 to 134 (GASGSGKS) is an ATP binding site. The region spanning 434-644 (IEIKTLSKRS…PYEAVLQNEF (211 aa)) is the ABC transmembrane type-2 domain. Helical transmembrane passes span 453-473 (LFGI…TVFW), 488-508 (FFAF…PVFL), 529-549 (VLSH…AFAA), 563-585 (GLLF…VTFL), 594-614 (LGYT…GFFI), and 713-733 (LFIT…TLLL).

It belongs to the ABC transporter superfamily. ABCG family. Eye pigment precursor importer (TC 3.A.1.204) subfamily.

The protein resides in the membrane. The polypeptide is ABC transporter G family member 1 (ABCG1) (Arabidopsis thaliana (Mouse-ear cress)).